We begin with the raw amino-acid sequence, 422 residues long: MAAAAVVEFQRAQSLLSTDREASIDILHSIVKRDIQENDEEAVQVKEQSILELGSLLAKTGQAAELGGLLKYVRPFLNSISKAKAARLVRSLLDLFLDMEAATGQEVELCLECIEWAKSEKRTFLRQALEARLVSLYFDTKRYQEALHLGSQLLRELKKMDDKALLVEVQLLESKTYHALSNLPKARAALTSARTTANAIYCPPKLQATLDMQSGIIHAAEEKDWKTAYSYFYEAFEGYDSIDSPKAITSLKYMLLCKIMLNTPEDVQALVSGKLALRYAGRQTEALKCVAQASKNRSLADFEKALTDYRAELRDDPIISTHLAKLYDNLLEQNLIRVIEPFSRVQIEHISSLIKLSKADVERKLSQMILDKKFHGILDQGEGVLIIFDEPPVDKTYEAALETIQNMSKVVDSLYNKAKKLT.

Ala-2 is subject to N-acetylalanine. Phosphoserine is present on residues Ser-14 and Ser-23. In terms of domain architecture, PCI spans 224–392 (DWKTAYSYFY…GVLIIFDEPP (169 aa)). Residue Lys-274 forms a Glycyl lysine isopeptide (Lys-Gly) (interchain with G-Cter in SUMO2) linkage.

This sequence belongs to the proteasome subunit S9 family. Component of the 19S proteasome regulatory particle complex. The 26S proteasome consists of a 20S core particle (CP) and two 19S regulatory subunits (RP). The regulatory particle is made of a lid composed of 9 subunits including PSMD11, a base containing 6 ATPases and few additional components. Phosphorylated by AMPK.

It localises to the nucleus. It is found in the cytoplasm. The protein localises to the cytosol. Its function is as follows. Component of the 26S proteasome, a multiprotein complex involved in the ATP-dependent degradation of ubiquitinated proteins. This complex plays a key role in the maintenance of protein homeostasis by removing misfolded or damaged proteins, which could impair cellular functions, and by removing proteins whose functions are no longer required. Therefore, the proteasome participates in numerous cellular processes, including cell cycle progression, apoptosis, or DNA damage repair. In the complex, PSMD11 is required for proteasome assembly. Plays a key role in increased proteasome activity in embryonic stem cells (ESCs): its high expression in ESCs promotes enhanced assembly of the 26S proteasome, followed by higher proteasome activity. The chain is 26S proteasome non-ATPase regulatory subunit 11 (PSMD11) from Bos taurus (Bovine).